Reading from the N-terminus, the 333-residue chain is 4-hydroxyproline epimerase (333 aa).

Cys-90 acts as the Proton acceptor in catalysis. Residues Gly-91 to His-92 and Asp-249 each bind substrate. Residue Cys-253 is the Proton donor of the active site. Gly-254 to Thr-255 lines the substrate pocket.

It belongs to the proline racemase family. As to quaternary structure, homodimer.

It carries out the reaction trans-4-hydroxy-L-proline = cis-4-hydroxy-D-proline. Functionally, allows intracellular utilization of 4-hydroxyproline, one of the major constituents of host collagen, by converting 4-hydroxy-L-proline to 4-hydroxy-D-proline, which can be further metabolized by intracellular 4-hydroxy-D-proline oxidases. Strong B-cell mitogen. Plays an important role in the regulation of intra- and extracellular amino acid pools, allowing the bacterium to profit from host precursors and enzymatic pathways. In Brucella abortus (strain S19), this protein is 4-hydroxyproline epimerase.